Reading from the N-terminus, the 204-residue chain is Large ribosomal subunit protein uL4 (204 aa).

A disordered region spans residues 49-76 (KTKGISDVSGTTAKPYGQKRTGRARQGS).

Belongs to the universal ribosomal protein uL4 family. In terms of assembly, part of the 50S ribosomal subunit.

In terms of biological role, one of the primary rRNA binding proteins, this protein initially binds near the 5'-end of the 23S rRNA. It is important during the early stages of 50S assembly. It makes multiple contacts with different domains of the 23S rRNA in the assembled 50S subunit and ribosome. Functionally, forms part of the polypeptide exit tunnel. The polypeptide is Large ribosomal subunit protein uL4 (Wolbachia sp. subsp. Drosophila simulans (strain wRi)).